The chain runs to 206 residues: High frequency lysogenization protein HflD homolog (206 aa).

This sequence belongs to the HflD family.

The protein resides in the cytoplasm. Its subcellular location is the cell inner membrane. The protein is High frequency lysogenization protein HflD homolog of Pseudomonas savastanoi pv. phaseolicola (strain 1448A / Race 6) (Pseudomonas syringae pv. phaseolicola (strain 1448A / Race 6)).